The following is a 224-amino-acid chain: Germin-like protein 8-12 (224 aa).

Residues 1 to 23 (MASSSLFLLGALLVLASWQAIVA) form the signal peptide. An intrachain disulfide couples Cys33 to Cys48. Residues 60–213 (FNAAKFDMPR…AFQVEKKLID (154 aa)) form the Cupin type-1 domain. N-linked (GlcNAc...) asparagine glycosylation is present at Asn78. His111, His113, Glu118, and His158 together coordinate Mn(2+).

This sequence belongs to the germin family. In terms of assembly, oligomer (believed to be a pentamer but probably hexamer).

The protein localises to the secreted. It is found in the extracellular space. Its subcellular location is the apoplast. Plays a role in broad-spectrum disease resistance. Probably has no oxalate oxidase activity even if the active site is conserved. The sequence is that of Germin-like protein 8-12 from Oryza sativa subsp. japonica (Rice).